The primary structure comprises 250 residues: MAAAGLALLCRRVSSALKSSRSLITPQVPACTGFFLSLLPKSTPNVTSFHQYRLLHTTLSRKGLEEFFDDPKNWGQEKVKSGAAWTCQQLRNKSNEDLHKLWYVLLKERNMLLTLEQEAKRQRLPMPSPERLDKVVDSMDALDKVVQEREDALRLLQTGQERARPGAWRRDIFGRIIWHKFKQWVIPWHLNKRYNRKRFFALPYVDHFLRLEREKRARIKARKENLERKKAKILLKKFPHLAEAQKSSLV.

Residue Lys-144 is modified to N6-acetyllysine.

The protein belongs to the universal ribosomal protein uL29 family. Component of the mitochondrial large ribosomal subunit (mt-LSU). Mature mammalian 55S mitochondrial ribosomes consist of a small (28S) and a large (39S) subunit. The 28S small subunit contains a 12S ribosomal RNA (12S mt-rRNA) and 30 different proteins. The 39S large subunit contains a 16S rRNA (16S mt-rRNA), a copy of mitochondrial valine transfer RNA (mt-tRNA(Val)), which plays an integral structural role, and 52 different proteins.

It is found in the mitochondrion. The protein is Large ribosomal subunit protein uL29m (MRPL47) of Homo sapiens (Human).